Reading from the N-terminus, the 232-residue chain is 7-cyano-7-deazaguanine synthase (232 aa).

7 to 17 (LSGGLDSTVVT) is an ATP binding site. The Zn(2+) site is built by Cys-195, Cys-206, Cys-209, and Cys-212.

It belongs to the QueC family. It depends on Zn(2+) as a cofactor.

It carries out the reaction 7-carboxy-7-deazaguanine + NH4(+) + ATP = 7-cyano-7-deazaguanine + ADP + phosphate + H2O + H(+). The protein operates within purine metabolism; 7-cyano-7-deazaguanine biosynthesis. Its function is as follows. Catalyzes the ATP-dependent conversion of 7-carboxy-7-deazaguanine (CDG) to 7-cyano-7-deazaguanine (preQ(0)). The polypeptide is 7-cyano-7-deazaguanine synthase (Methanocaldococcus jannaschii (strain ATCC 43067 / DSM 2661 / JAL-1 / JCM 10045 / NBRC 100440) (Methanococcus jannaschii)).